A 392-amino-acid polypeptide reads, in one-letter code: Putative nickel insertion protein (392 aa).

This sequence belongs to the LarC family.

The chain is Putative nickel insertion protein from Pelobacter propionicus (strain DSM 2379 / NBRC 103807 / OttBd1).